The following is a 265-amino-acid chain: Hydroxyethylthiazole kinase 1 (265 aa).

Met-39 is a binding site for substrate. ATP-binding residues include Lys-115 and Thr-168. Gly-195 contacts substrate.

It belongs to the Thz kinase family. It depends on Mg(2+) as a cofactor.

It catalyses the reaction 5-(2-hydroxyethyl)-4-methylthiazole + ATP = 4-methyl-5-(2-phosphooxyethyl)-thiazole + ADP + H(+). Its pathway is cofactor biosynthesis; thiamine diphosphate biosynthesis; 4-methyl-5-(2-phosphoethyl)-thiazole from 5-(2-hydroxyethyl)-4-methylthiazole: step 1/1. Functionally, catalyzes the phosphorylation of the hydroxyl group of 4-methyl-5-beta-hydroxyethylthiazole (THZ). This Clostridium botulinum (strain Loch Maree / Type A3) protein is Hydroxyethylthiazole kinase 1.